Here is a 139-residue protein sequence, read N- to C-terminus: von Hippel-Lindau-like protein (139 aa).

Residues Met-1 to Pro-22 are disordered. Residues Ser-54 to Leu-135 are beta-domain.

The protein belongs to the VHL family. Interacts via the beta domain with the ODD domain of HIF1A. This interaction is independent of prolyl hydroxylation of HIF1A. In terms of tissue distribution, abundantly expressed in the placenta.

Functionally, functions as a dominant-negative VHL to serve as a protector of HIFalpha. This chain is von Hippel-Lindau-like protein (VHLL), found in Homo sapiens (Human).